Consider the following 190-residue polypeptide: Translation initiation factor IF-3 (190 aa).

The protein belongs to the IF-3 family. As to quaternary structure, monomer.

The protein resides in the cytoplasm. IF-3 binds to the 30S ribosomal subunit and shifts the equilibrium between 70S ribosomes and their 50S and 30S subunits in favor of the free subunits, thus enhancing the availability of 30S subunits on which protein synthesis initiation begins. In Prochlorococcus marinus (strain MIT 9312), this protein is Translation initiation factor IF-3.